A 212-amino-acid polypeptide reads, in one-letter code: Ropporin-1 (212 aa).

Residues Pro12 to Ala43 form the RIIa domain. Ser56 is subject to Phosphoserine. Residues Val209 to Glu212 are interaction with RHPN1.

It belongs to the ropporin family. In terms of assembly, homodimer. Interacts with AKAP3. May interact with SPA17. Interacts with RHPN1. Interacts with FSCB; the interaction increases upon spermatozoa capacitation conditions. Interacts with CFAP61. Sumoylated, sumoylation decreases upon spermatozoa capacitation conditions.

The protein resides in the cell projection. Its subcellular location is the cilium. It is found in the flagellum. Important for male fertility. With ROPN1L, involved in fibrous sheath integrity and sperm motility, plays a role in PKA-dependent signaling processes required for spermatozoa capacitation. This chain is Ropporin-1 (ROPN1), found in Bos taurus (Bovine).